The chain runs to 79 residues: Metallothionein-like protein type 2 (79 aa).

It belongs to the metallothionein superfamily. Type 15 family.

In terms of biological role, metallothioneins have a high content of cysteine residues that bind various heavy metals. The sequence is that of Metallothionein-like protein type 2 (MT1) from Malus domestica (Apple).